The primary structure comprises 222 residues: Peptide methionine sulfoxide reductase MsrA 1 (222 aa).

Cysteine 57 is an active-site residue.

It belongs to the MsrA Met sulfoxide reductase family.

It catalyses the reaction L-methionyl-[protein] + [thioredoxin]-disulfide + H2O = L-methionyl-(S)-S-oxide-[protein] + [thioredoxin]-dithiol. The catalysed reaction is [thioredoxin]-disulfide + L-methionine + H2O = L-methionine (S)-S-oxide + [thioredoxin]-dithiol. In terms of biological role, has an important function as a repair enzyme for proteins that have been inactivated by oxidation. Catalyzes the reversible oxidation-reduction of methionine sulfoxide in proteins to methionine. This Synechocystis sp. (strain ATCC 27184 / PCC 6803 / Kazusa) protein is Peptide methionine sulfoxide reductase MsrA 1 (msrA1).